The primary structure comprises 728 residues: 1,4-alpha-glucan branching enzyme GlgB (728 aa).

Residue Asp405 is the Nucleophile of the active site. Glu458 functions as the Proton donor in the catalytic mechanism.

It belongs to the glycosyl hydrolase 13 family. GlgB subfamily. As to quaternary structure, monomer.

It catalyses the reaction Transfers a segment of a (1-&gt;4)-alpha-D-glucan chain to a primary hydroxy group in a similar glucan chain.. Its pathway is glycan biosynthesis; glycogen biosynthesis. Its function is as follows. Catalyzes the formation of the alpha-1,6-glucosidic linkages in glycogen by scission of a 1,4-alpha-linked oligosaccharide from growing alpha-1,4-glucan chains and the subsequent attachment of the oligosaccharide to the alpha-1,6 position. The protein is 1,4-alpha-glucan branching enzyme GlgB of Escherichia coli O6:H1 (strain CFT073 / ATCC 700928 / UPEC).